The chain runs to 1069 residues: MPLNKDIKKVLVIGSGPIVIGQAAEFDYSGTQACEALKSEGIEVVLVNSNPATIMTDKEVADKVYLEPLTLEFVEKVIAKERPDSLLAGMGGQTGLNLAVELHDSGILEKYNVKVIGTSIASIKEGEDRELFRDMMNRIGEPVIKSEIVTDLTAGLEFANKIGYPVIVRPAYTLGGSGGGIADDEEQLRTILESGLQLSTIGQVLLEKSVKGWKEVEYEVMRDSYGNCITVCNMENIDPVGIHTGDSIVVAPSQTLSDKEYQMLRTASINIINAVGIEGGCNVQFSLNPNSFEYAVIEINPRVSRSSALASKATGYPIAKLAAKIALGYGLDEIKNAVTQKTYACFEPTLDYVVVKIPKWPFDKFFGADRELGTKMMATGEIMAIGANFEQAFLKGIRSLEIGKYSLDHNKFKEYSISKLKSIVMKPDDERIFALAEMIRRDYMIDRINKITGIDMFFLEKIKWIVEEEQRLKLSKIEDLDKEWLHHLKKKGFSDKAIADMLKVSPDDVYRLRDIWSIKPSYKMVDTCGGEFEALSPYYYSTYEQYDEVEVSNNKKVIVIGSGPIRIGQGIEFDYASVHCVKALKKLGIETIIVNNNPETVSTDFDVSDKLYFEPLTEEDVLNIIEKEKPDGVILQFGGQTAIKLANFLKEQNIVTLGTTADQIDMAEDREKFDELLERLGISRPKGKGIWSLEEGLEEAKRLKFPVLVRPSYVIGGQGMEITHDEEELTYYLENAFAKDSKNPILIDKYLMGREIEVDAISDGENILIPGIMEHLERAGVHSGDSVTMYPSQNISDKIKADVLEYTKKLALAIGIKGMINIQFIEFEGELYVIEVNPRASRTVPYISKVSGVPIVDLATQVMLGAKLKELGYGIDVYKEPELVSVKVPVFSTQKLPNVEVSLGPEMRSTGEVLGVGRNIKEALYKGFVGAYMYPSKEKGKILATINKHDKAEFLPIAKDLASVGYKFIATSGTCALLKEAGIEVEEIRKIDEEEPNILDIVKNREVDLVVNTPTKGNDSKRDGFLIRRAAVERNLGVITALDTLRAIADVELEKFDENKDLEVFNIAK.

The tract at residues 1–401 (MPLNKDIKKV…AFLKGIRSLE (401 aa)) is carboxyphosphate synthetic domain. 12 residues coordinate ATP: Arg-129, Arg-169, Gly-175, Gly-176, Lys-208, Val-210, Glu-215, Gly-241, Ile-242, His-243, Gln-284, and Glu-298. One can recognise an ATP-grasp 1 domain in the interval 133–327 (RDMMNRIGEP…IAKLAAKIAL (195 aa)). Mg(2+) contacts are provided by Gln-284, Glu-298, and Asn-300. Mn(2+) contacts are provided by Gln-284, Glu-298, and Asn-300. Residues 402 to 549 (IGKYSLDHNK…YSTYEQYDEV (148 aa)) form an oligomerization domain region. The interval 550-932 (EVSNNKKVIV…ALYKGFVGAY (383 aa)) is carbamoyl phosphate synthetic domain. The region spanning 674–864 (DELLERLGIS…IVDLATQVML (191 aa)) is the ATP-grasp 2 domain. ATP-binding residues include Arg-710, Lys-749, Leu-751, Glu-755, Gly-780, Val-781, His-782, Ser-783, Gln-823, and Glu-835. Residues Gln-823, Glu-835, and Asn-837 each contribute to the Mg(2+) site. Residues Gln-823, Glu-835, and Asn-837 each contribute to the Mn(2+) site. Residues 932–1069 (YMYPSKEKGK…KDLEVFNIAK (138 aa)) enclose the MGS-like domain. The interval 933-1069 (MYPSKEKGKI…KDLEVFNIAK (137 aa)) is allosteric domain.

Belongs to the CarB family. As to quaternary structure, composed of two chains; the small (or glutamine) chain promotes the hydrolysis of glutamine to ammonia, which is used by the large (or ammonia) chain to synthesize carbamoyl phosphate. Tetramer of heterodimers (alpha,beta)4. Mg(2+) is required as a cofactor. Mn(2+) serves as cofactor.

It catalyses the reaction hydrogencarbonate + L-glutamine + 2 ATP + H2O = carbamoyl phosphate + L-glutamate + 2 ADP + phosphate + 2 H(+). The enzyme catalyses hydrogencarbonate + NH4(+) + 2 ATP = carbamoyl phosphate + 2 ADP + phosphate + 2 H(+). It participates in amino-acid biosynthesis; L-arginine biosynthesis; carbamoyl phosphate from bicarbonate: step 1/1. Its pathway is pyrimidine metabolism; UMP biosynthesis via de novo pathway; (S)-dihydroorotate from bicarbonate: step 1/3. In terms of biological role, large subunit of the glutamine-dependent carbamoyl phosphate synthetase (CPSase). CPSase catalyzes the formation of carbamoyl phosphate from the ammonia moiety of glutamine, carbonate, and phosphate donated by ATP, constituting the first step of 2 biosynthetic pathways, one leading to arginine and/or urea and the other to pyrimidine nucleotides. The large subunit (synthetase) binds the substrates ammonia (free or transferred from glutamine from the small subunit), hydrogencarbonate and ATP and carries out an ATP-coupled ligase reaction, activating hydrogencarbonate by forming carboxy phosphate which reacts with ammonia to form carbamoyl phosphate. The sequence is that of Carbamoyl phosphate synthase large chain from Clostridium beijerinckii (strain ATCC 51743 / NCIMB 8052) (Clostridium acetobutylicum).